A 750-amino-acid polypeptide reads, in one-letter code: Circadian input-output histidine kinase CikA (750 aa).

The N-terminal domain stretch occupies residues 1 to 173 (MLPAFSPIFR…QVIAQIRQSL (173 aa)). The GAF domain stretch occupies residues 174 to 333 (DLSEILNNAV…KNFLGQIGEH (160 aa)). Positions 385-609 (NISHELRTPL…IFTTVIPQQN (225 aa)) constitute a Histidine kinase domain. His388 is subject to Phosphohistidine; by autocatalysis. The segment at 604–750 (VIPQQNFPPT…VQSIQQEPLR (147 aa)) is psR domain, bind KaiB(fs). Residues 631-745 (SVIVIEQDEE…LLLQRVQSIQ (115 aa)) form the Response regulatory domain. A 4-aspartylphosphate modification is found at Asp680.

It in the N-terminal section; belongs to the phytochrome family. In terms of assembly, homodimer. Part of the circadian clock (KaiA, KaiB, KaiC, CikA, RpaA, SasA), the composition of which varies during the circadian cycle. KaiA and CikA compete for binding to KaiB(fs). Interacts with RpaA.

It catalyses the reaction ATP + protein L-histidine = ADP + protein N-phospho-L-histidine.. Functions in an input pathway to the Kai circadian clock. Senses oxidized quinones via its C-terminal pseudo-receiver domain, providing a link between cell metabolism and the clock. Affects the ratio of phosphorylated to unphosphorylated KaiC, binds quinones via its pseudo-receptor domain. Quinone-binding destabilizes the protein rapidly. Autophosphorylates, does not transfer the phosphate to its pseudo-receiver (PsR) domain. May play a role in cell division. Its function is as follows. Also functions in a two-component CikA/RpaA output pathway from the circadian clock, negatively regulating kaiBC expression independently of labA and of sasA. One of three clock output pathways. Dephosphorylates phospho-RpaA, enhanced by KaiB and KaiC, has only modest kinase activity on RpaA. This Synechocystis sp. (strain ATCC 27184 / PCC 6803 / Kazusa) protein is Circadian input-output histidine kinase CikA.